We begin with the raw amino-acid sequence, 141 residues long: Large ribosomal subunit protein uL11 (141 aa).

The protein belongs to the universal ribosomal protein uL11 family. Part of the ribosomal stalk of the 50S ribosomal subunit. Interacts with L10 and the large rRNA to form the base of the stalk. L10 forms an elongated spine to which L12 dimers bind in a sequential fashion forming a multimeric L10(L12)X complex. In terms of processing, one or more lysine residues are methylated.

Functionally, forms part of the ribosomal stalk which helps the ribosome interact with GTP-bound translation factors. This Levilactobacillus brevis (strain ATCC 367 / BCRC 12310 / CIP 105137 / JCM 1170 / LMG 11437 / NCIMB 947 / NCTC 947) (Lactobacillus brevis) protein is Large ribosomal subunit protein uL11.